Here is a 167-residue protein sequence, read N- to C-terminus: Putative pre-16S rRNA nuclease (167 aa).

The protein belongs to the YqgF nuclease family.

The protein resides in the cytoplasm. Could be a nuclease involved in processing of the 5'-end of pre-16S rRNA. This chain is Putative pre-16S rRNA nuclease, found in Streptomyces coelicolor (strain ATCC BAA-471 / A3(2) / M145).